Here is a 438-residue protein sequence, read N- to C-terminus: V-type ATP synthase beta chain (438 aa).

The protein belongs to the ATPase alpha/beta chains family.

Its function is as follows. Produces ATP from ADP in the presence of a proton gradient across the membrane. The V-type beta chain is a regulatory subunit. This Chlamydia muridarum (strain MoPn / Nigg) protein is V-type ATP synthase beta chain (atpB).